The chain runs to 353 residues: ATP-dependent kinase YFH7 (353 aa).

Residue 31-39 coordinates ATP; that stretch reads GSPGSGKST.

Belongs to the YFH7 family.

Its function is as follows. ATP-dependent kinase that could be involved in endoplasmic reticulum membrane assembly. The protein is ATP-dependent kinase YFH7 (YFH7) of Saccharomyces cerevisiae (strain ATCC 204508 / S288c) (Baker's yeast).